The primary structure comprises 1579 residues: DNA-directed RNA polymerase subunit beta' (1579 aa).

Cys-65, Cys-67, Cys-80, and Cys-83 together coordinate Zn(2+). Positions 601, 603, and 605 each coordinate Mg(2+). Zn(2+)-binding residues include Cys-938, Cys-1012, Cys-1019, and Cys-1022.

The protein belongs to the RNA polymerase beta' chain family. As to quaternary structure, the RNAP catalytic core consists of 2 alpha, 1 beta, 1 beta' and 1 omega subunit. When a sigma factor is associated with the core the holoenzyme is formed, which can initiate transcription. It depends on Mg(2+) as a cofactor. Zn(2+) is required as a cofactor.

The catalysed reaction is RNA(n) + a ribonucleoside 5'-triphosphate = RNA(n+1) + diphosphate. Its function is as follows. DNA-dependent RNA polymerase catalyzes the transcription of DNA into RNA using the four ribonucleoside triphosphates as substrates. This is DNA-directed RNA polymerase subunit beta' from Sulfurihydrogenibium sp. (strain YO3AOP1).